A 123-amino-acid polypeptide reads, in one-letter code: Ribosome-binding factor A (123 aa).

This sequence belongs to the RbfA family. As to quaternary structure, monomer. Binds 30S ribosomal subunits, but not 50S ribosomal subunits or 70S ribosomes.

The protein resides in the cytoplasm. In terms of biological role, one of several proteins that assist in the late maturation steps of the functional core of the 30S ribosomal subunit. Associates with free 30S ribosomal subunits (but not with 30S subunits that are part of 70S ribosomes or polysomes). Required for efficient processing of 16S rRNA. May interact with the 5'-terminal helix region of 16S rRNA. The protein is Ribosome-binding factor A of Syntrophus aciditrophicus (strain SB).